The primary structure comprises 1115 residues: Eukaryotic translation initiation factor 2-alpha kinase 3 (1115 aa).

A signal peptide spans 1-29 (MERATGPGSLARTLLLPLLLGLVAGTVTA). The Extracellular segment spans residues 30–514 (RRTSDLLAPT…PNYKNIRKKD (485 aa)). Positions 74–101 (SEALPAAAGEQEAREPEPEPEEEPDIRP) are disordered. N-linked (GlcNAc...) asparagine glycosylation occurs at N259. A helical transmembrane segment spans residues 515-535 (PVLLLHWWKEIVGTIVFCIVA). The Cytoplasmic portion of the chain corresponds to 536–1115 (TTFIVRRLFH…SSPHSPLPSN (580 aa)). Positions 593 to 1076 (FEPIQCMGRG…AASIIENAIF (484 aa)) constitute a Protein kinase domain. 599–607 (MGRGGFGVV) is an ATP binding site. Phosphotyrosine; by autocatalysis is present on Y619. K622 serves as a coordination point for ATP. The interval 647–887 (EHPGIVRYFN…SPKVYLYIQM (241 aa)) is insert loop. S715 is subject to Phosphoserine. Phosphothreonine is present on T802. Disordered regions lie at residues 807 to 832 (VFED…VGNH) and 841 to 860 (RHSG…SRPT). Residues 845-860 (SKSSEPTVSVSPSRPT) are compositionally biased toward polar residues. D936 functions as the Proton acceptor in the catalytic mechanism. At T981 the chain carries Phosphothreonine. Residues 1087–1115 (LRQRSRSMSSPGAKHSRHSSSPHSPLPSN) are disordered. At S1093 the chain carries Phosphoserine.

This sequence belongs to the protein kinase superfamily. Ser/Thr protein kinase family. GCN2 subfamily. Forms dimers with HSPA5/BIP in resting cells. Homotetramerizes in response to endoplasmic reticulum (ER) stress, leading to its activation. Interacts with HSP90B1/GRP94. Interacts with DNAJC3; inhibiting EIF2AK3/PERK activity. Interacts with ATAD3A; ATAD3A and EIF2S1/eIF-2-alpha occupy a common binding site within the cytoplasmic loop of EIF2AK3/PERK, leading to prevent EIF2AK3/PERK association with its substrate EIF2S1/eIF-2-alpha. Interacts with MFN2. Interacts with TMEM33. Interacts with PDIA6. Interacts with LACC1. Oligomerization of the N-terminal ER luminal domain by ER stress promotes EIF2AK3/PERK trans-autophosphorylation of the C-terminal cytoplasmic kinase domain at multiple residues including Thr-981 on the kinase activation loop. Autophosphorylated at Tyr-619 following endoplasmic reticulum stress, leading to activate its activity. Dephosphorylated at Tyr-619 by PTPN1/PTP1B, leading to inactivate its enzyme activity. Phosphorylation at Thr-802 by AKT (AKT1, AKT2 and/or AKT3) inactivates EIF2AK3/PERK. Post-translationally, ADP-ribosylated by PARP16 upon ER stress, which increases kinase activity.

It localises to the endoplasmic reticulum membrane. It carries out the reaction L-seryl-[protein] + ATP = O-phospho-L-seryl-[protein] + ADP + H(+). The catalysed reaction is L-threonyl-[protein] + ATP = O-phospho-L-threonyl-[protein] + ADP + H(+). It catalyses the reaction L-tyrosyl-[protein] + ATP = O-phospho-L-tyrosyl-[protein] + ADP + H(+). With respect to regulation, inhibited by HSPA5/BIP in absence of stress. Perturbation in protein folding in the endoplasmic reticulum (ER) promotes reversible dissociation from HSPA5/BIP and oligomerization, resulting in trans-autophosphorylation and kinase activity induction. Inactivated following phosphorylation at Thr-802 by AKT (AKT1, AKT2 and/or AKT3). Inhibited by ATAD3A at mitochondria-endoplasmic reticulum contact sites, providing a safe haven for mitochondrial protein translation during ER stress. In terms of biological role, metabolic-stress sensing protein kinase that phosphorylates the alpha subunit of eukaryotic translation initiation factor 2 (EIF2S1/eIF-2-alpha) in response to various stress, such as unfolded protein response (UPR). Key effector of the integrated stress response (ISR) to unfolded proteins: EIF2AK3/PERK specifically recognizes and binds misfolded proteins, leading to its activation and EIF2S1/eIF-2-alpha phosphorylation. EIF2S1/eIF-2-alpha phosphorylation in response to stress converts EIF2S1/eIF-2-alpha in a global protein synthesis inhibitor, leading to a global attenuation of cap-dependent translation, while concomitantly initiating the preferential translation of ISR-specific mRNAs, such as the transcriptional activators ATF4 and QRICH1, and hence allowing ATF4- and QRICH1-mediated reprogramming. The EIF2AK3/PERK-mediated unfolded protein response increases mitochondrial oxidative phosphorylation by promoting ATF4-mediated expression of COX7A2L/SCAF1, thereby increasing formation of respiratory chain supercomplexes. In contrast to most subcellular compartments, mitochondria are protected from the EIF2AK3/PERK-mediated unfolded protein response due to EIF2AK3/PERK inhibition by ATAD3A at mitochondria-endoplasmic reticulum contact sites. In addition to EIF2S1/eIF-2-alpha, also phosphorylates NFE2L2/NRF2 in response to stress, promoting release of NFE2L2/NRF2 from the BCR(KEAP1) complex, leading to nuclear accumulation and activation of NFE2L2/NRF2. Serves as a critical effector of unfolded protein response (UPR)-induced G1 growth arrest due to the loss of cyclin-D1 (CCND1). Involved in control of mitochondrial morphology and function. The protein is Eukaryotic translation initiation factor 2-alpha kinase 3 of Bos taurus (Bovine).